The sequence spans 59 residues: Chromatin protein Cren7 (59 aa).

It belongs to the Cren7 family. Monomer. Post-translationally, methylated at multiple sites, to varying extents.

It localises to the chromosome. The protein localises to the cytoplasm. Functionally, a chromatin protein, binds double-stranded DNA without sequence specificity. Constrains negative DNA supercoils. In Pyrobaculum arsenaticum (strain DSM 13514 / JCM 11321 / PZ6), this protein is Chromatin protein Cren7.